Here is a 158-residue protein sequence, read N- to C-terminus: C-type lectin mannose-binding isoform (158 aa).

Positions 1–23 (MGRFLLVTLSLLVGAFSLNEANS) are cleaved as a signal peptide. 4 disulfides stabilise this stretch: C26–C37, C54–C154, C61–C156, and C129–C146. A C-type lectin domain is found at 33-155 (KNGFCYKVFN…CKALYSFICQ (123 aa)). Positions 119–121 (EPN) match the Mannose-binding motif. The N-linked (GlcNAc...) asparagine glycan is linked to N121. Residues E127, N142, and D143 each contribute to the Ca(2+) site.

This sequence belongs to the true venom lectin family. In terms of assembly, dimer. Probably disulfide-linked homodimer. Expressed by the venom gland.

It is found in the secreted. In terms of biological role, mannose-binding lectin that binds to and agglutinates rabbit (but not human) erythrocytes in a calcium-dependent manner. The chain is C-type lectin mannose-binding isoform from Oxyuranus scutellatus (Coastal taipan).